Here is a 208-residue protein sequence, read N- to C-terminus: Holliday junction resolvase RecU (208 aa).

Positions 1 to 25 are disordered; it reads MNYPNGKPFNRNKTKVGRTNDHKSS. Residues T87, D89, E102, and Q121 each coordinate Mg(2+).

This sequence belongs to the RecU family. Requires Mg(2+) as cofactor.

The protein resides in the cytoplasm. It catalyses the reaction Endonucleolytic cleavage at a junction such as a reciprocal single-stranded crossover between two homologous DNA duplexes (Holliday junction).. Its function is as follows. Endonuclease that resolves Holliday junction intermediates in genetic recombination. Cleaves mobile four-strand junctions by introducing symmetrical nicks in paired strands. Promotes annealing of linear ssDNA with homologous dsDNA. Required for DNA repair, homologous recombination and chromosome segregation. The polypeptide is Holliday junction resolvase RecU (Staphylococcus carnosus (strain TM300)).